The following is a 689-amino-acid chain: Glycine--tRNA ligase beta subunit (689 aa).

It belongs to the class-II aminoacyl-tRNA synthetase family. In terms of assembly, tetramer of two alpha and two beta subunits.

Its subcellular location is the cytoplasm. The catalysed reaction is tRNA(Gly) + glycine + ATP = glycyl-tRNA(Gly) + AMP + diphosphate. The protein is Glycine--tRNA ligase beta subunit of Pseudoalteromonas translucida (strain TAC 125).